A 373-amino-acid polypeptide reads, in one-letter code: Chaperone protein DnaJ (373 aa).

In terms of domain architecture, J spans 5 to 70; sequence DYYEVLGVNR…QKRAAYDQYG (66 aa). The segment at 133–211 adopts a CR-type zinc-finger fold; it reads GTETKIRIPV…CHGGGRVKQH (79 aa). Positions 146, 149, 163, 166, 185, 188, 199, and 202 each coordinate Zn(2+). CXXCXGXG motif repeat units lie at residues 146–153, 163–170, 185–192, and 199–206; these read CETCHGSG, CSTCGGHG, CPKCHGSG, and CPTCHGGG. Residues 346 to 373 are disordered; sequence LEDINQQDSGKHSPREKSWMTKVKDFFQ. Residues 354–373 are compositionally biased toward basic and acidic residues; sequence SGKHSPREKSWMTKVKDFFQ.

Belongs to the DnaJ family. As to quaternary structure, homodimer. It depends on Zn(2+) as a cofactor.

Its subcellular location is the cytoplasm. Participates actively in the response to hyperosmotic and heat shock by preventing the aggregation of stress-denatured proteins and by disaggregating proteins, also in an autonomous, DnaK-independent fashion. Unfolded proteins bind initially to DnaJ; upon interaction with the DnaJ-bound protein, DnaK hydrolyzes its bound ATP, resulting in the formation of a stable complex. GrpE releases ADP from DnaK; ATP binding to DnaK triggers the release of the substrate protein, thus completing the reaction cycle. Several rounds of ATP-dependent interactions between DnaJ, DnaK and GrpE are required for fully efficient folding. Also involved, together with DnaK and GrpE, in the DNA replication of plasmids through activation of initiation proteins. The sequence is that of Chaperone protein DnaJ from Methylobacillus flagellatus (strain ATCC 51484 / DSM 6875 / VKM B-1610 / KT).